We begin with the raw amino-acid sequence, 387 residues long: Chorismate synthase (387 aa).

2 residues coordinate NADP(+): R40 and R46. FMN contacts are provided by residues 129–131 (RSS), 250–251 (QA), G295, 310–314 (KPIPT), and R336.

This sequence belongs to the chorismate synthase family. As to quaternary structure, homotetramer. FMNH2 is required as a cofactor.

The enzyme catalyses 5-O-(1-carboxyvinyl)-3-phosphoshikimate = chorismate + phosphate. It functions in the pathway metabolic intermediate biosynthesis; chorismate biosynthesis; chorismate from D-erythrose 4-phosphate and phosphoenolpyruvate: step 7/7. Functionally, catalyzes the anti-1,4-elimination of the C-3 phosphate and the C-6 proR hydrogen from 5-enolpyruvylshikimate-3-phosphate (EPSP) to yield chorismate, which is the branch point compound that serves as the starting substrate for the three terminal pathways of aromatic amino acid biosynthesis. This reaction introduces a second double bond into the aromatic ring system. The polypeptide is Chorismate synthase (Desulforamulus reducens (strain ATCC BAA-1160 / DSM 100696 / MI-1) (Desulfotomaculum reducens)).